Reading from the N-terminus, the 221-residue chain is Deoxyribose-phosphate aldolase (221 aa).

Catalysis depends on aspartate 90, which acts as the Proton donor/acceptor. Lysine 152 serves as the catalytic Schiff-base intermediate with acetaldehyde. Residue lysine 181 is the Proton donor/acceptor of the active site.

Belongs to the DeoC/FbaB aldolase family. DeoC type 1 subfamily.

The protein localises to the cytoplasm. It catalyses the reaction 2-deoxy-D-ribose 5-phosphate = D-glyceraldehyde 3-phosphate + acetaldehyde. It participates in carbohydrate degradation; 2-deoxy-D-ribose 1-phosphate degradation; D-glyceraldehyde 3-phosphate and acetaldehyde from 2-deoxy-alpha-D-ribose 1-phosphate: step 2/2. Catalyzes a reversible aldol reaction between acetaldehyde and D-glyceraldehyde 3-phosphate to generate 2-deoxy-D-ribose 5-phosphate. The chain is Deoxyribose-phosphate aldolase from Exiguobacterium sibiricum (strain DSM 17290 / CCUG 55495 / CIP 109462 / JCM 13490 / 255-15).